A 473-amino-acid chain; its full sequence is Adenosylhomocysteinase (473 aa).

Substrate contacts are provided by T64, D139, and E199. Position 200–202 (200–202) interacts with NAD(+); that stretch reads TTT. 2 residues coordinate substrate: K229 and D233. NAD(+)-binding positions include N234, 263–268, E286, N321, 342–344, and N387; these read GYGDVG and IGH.

The protein belongs to the adenosylhomocysteinase family. NAD(+) serves as cofactor.

Its subcellular location is the cytoplasm. It carries out the reaction S-adenosyl-L-homocysteine + H2O = L-homocysteine + adenosine. Its pathway is amino-acid biosynthesis; L-homocysteine biosynthesis; L-homocysteine from S-adenosyl-L-homocysteine: step 1/1. May play a key role in the regulation of the intracellular concentration of adenosylhomocysteine. This chain is Adenosylhomocysteinase, found in Burkholderia thailandensis (strain ATCC 700388 / DSM 13276 / CCUG 48851 / CIP 106301 / E264).